The chain runs to 1383 residues: DNA-directed RNA polymerase subunit beta (1383 aa).

The protein belongs to the RNA polymerase beta chain family. As to quaternary structure, the RNAP catalytic core consists of 2 alpha, 1 beta, 1 beta' and 1 omega subunit. When a sigma factor is associated with the core the holoenzyme is formed, which can initiate transcription.

The catalysed reaction is RNA(n) + a ribonucleoside 5'-triphosphate = RNA(n+1) + diphosphate. In terms of biological role, DNA-dependent RNA polymerase catalyzes the transcription of DNA into RNA using the four ribonucleoside triphosphates as substrates. This is DNA-directed RNA polymerase subunit beta from Xanthomonas euvesicatoria pv. vesicatoria (strain 85-10) (Xanthomonas campestris pv. vesicatoria).